Reading from the N-terminus, the 663-residue chain is Oligopeptide-binding protein SarA (663 aa).

The N-terminal stretch at 1 to 22 is a signal peptide; it reads MKKGKILALAGVALLATGVLAA. Cys-23 is lipidated: N-palmitoyl cysteine. A lipid anchor (S-diacylglycerol cysteine) is attached at Cys-23. The segment at 637-663 is disordered; the sequence is QKAQEKWNKERAESNKKAQEELEKHVK.

Belongs to the bacterial solute-binding protein 5 family.

The protein resides in the cell membrane. Functionally, may be involved in the expression of cell surface properties important for colonization of the human oral cavity. It may also be involved in uptake processes. In Streptococcus gordonii (strain Challis / ATCC 35105 / BCRC 15272 / CH1 / DL1 / V288), this protein is Oligopeptide-binding protein SarA (sarA).